The chain runs to 750 residues: Photosystem I P700 chlorophyll a apoprotein A1 (750 aa).

The next 8 membrane-spanning stretches (helical) occupy residues 70-93 (VFSA…FHGA), 156-179 (LYCT…FHYH), 195-219 (LNHH…HVSL), 291-309 (IAHH…GHMY), 346-369 (WHAQ…HHMY), 385-411 (LSLF…IFMV), 433-455 (AIIS…LYIH), and 531-549 (FLVH…LILL). Cysteine 573 and cysteine 582 together coordinate [4Fe-4S] cluster. The next 2 membrane-spanning stretches (helical) occupy residues 589 to 610 (HVFL…HFSW) and 664 to 686 (LSAY…MFLF). Histidine 675 provides a ligand contact to chlorophyll a'. Methionine 683 and tyrosine 691 together coordinate chlorophyll a. Tryptophan 692 is a binding site for phylloquinone. A helical membrane pass occupies residues 724–744 (AVGVTHYLLGGIATTWAFFLA).

The protein belongs to the PsaA/PsaB family. In terms of assembly, the PsaA/B heterodimer binds the P700 chlorophyll special pair and subsequent electron acceptors. PSI consists of a core antenna complex that captures photons, and an electron transfer chain that converts photonic excitation into a charge separation. The eukaryotic PSI reaction center is composed of at least 11 subunits. The cofactor is P700 is a chlorophyll a/chlorophyll a' dimer, A0 is one or more chlorophyll a, A1 is one or both phylloquinones and FX is a shared 4Fe-4S iron-sulfur center..

It localises to the plastid. It is found in the chloroplast thylakoid membrane. The enzyme catalyses reduced [plastocyanin] + hnu + oxidized [2Fe-2S]-[ferredoxin] = oxidized [plastocyanin] + reduced [2Fe-2S]-[ferredoxin]. In terms of biological role, psaA and PsaB bind P700, the primary electron donor of photosystem I (PSI), as well as the electron acceptors A0, A1 and FX. PSI is a plastocyanin-ferredoxin oxidoreductase, converting photonic excitation into a charge separation, which transfers an electron from the donor P700 chlorophyll pair to the spectroscopically characterized acceptors A0, A1, FX, FA and FB in turn. Oxidized P700 is reduced on the lumenal side of the thylakoid membrane by plastocyanin. The protein is Photosystem I P700 chlorophyll a apoprotein A1 of Lepidium virginicum (Virginia pepperweed).